The chain runs to 209 residues: Inorganic pyrophosphatase (209 aa).

Substrate contacts are provided by K38, R52, and Y64. Mg(2+) contacts are provided by D92, D97, and D130. Residue Y167 coordinates substrate.

Belongs to the PPase family. Homohexamer. Mg(2+) serves as cofactor.

Its subcellular location is the cytoplasm. It carries out the reaction diphosphate + H2O = 2 phosphate + H(+). In terms of biological role, catalyzes the hydrolysis of inorganic pyrophosphate (PPi) forming two phosphate ions. The protein is Inorganic pyrophosphatase of Chlamydia muridarum (strain MoPn / Nigg).